The sequence spans 259 residues: uncharacterized protein (259 aa).

Positions 9, 11, 97, 133, 157, and 207 each coordinate a divalent metal cation.

The protein belongs to the metallo-dependent hydrolases superfamily. TatD-type hydrolase family. A divalent metal cation serves as cofactor.

This is an uncharacterized protein from Escherichia coli (strain K12).